The primary structure comprises 188 residues: Gamma-glutamylcyclotransferase (188 aa).

Substrate is bound at residue 19-24; it reads YFAYGS. Glu98 acts as the Proton acceptor in catalysis. Substrate is bound at residue Tyr139. At Ser173 the chain carries Phosphoserine.

The protein belongs to the gamma-glutamylcyclotransferase family. In terms of assembly, homodimer.

It catalyses the reaction an alpha-(gamma-L-glutamyl)-L-amino acid = 5-oxo-L-proline + an L-alpha-amino acid. Functionally, catalyzes the formation of 5-oxoproline from gamma-glutamyl dipeptides and may play a significant role in glutathione homeostasis. Induces release of cytochrome c from mitochondria with resultant induction of apoptosis. The protein is Gamma-glutamylcyclotransferase of Homo sapiens (Human).